Consider the following 389-residue polypeptide: Chalcone synthase H2 (389 aa).

C164 is a catalytic residue.

The protein belongs to the thiolase-like superfamily. Chalcone/stilbene synthases family.

Its subcellular location is the cytoplasm. It carries out the reaction (E)-4-coumaroyl-CoA + 3 malonyl-CoA + 3 H(+) = 2',4,4',6'-tetrahydroxychalcone + 3 CO2 + 4 CoA. Its pathway is secondary metabolite biosynthesis; flavonoid biosynthesis. Involved in the biosynthesis of prenylated phenolics natural products which contribute to the bitter taste of beer and display broad biological activities. Chalcone synthase that can use 4-coumaroyl-CoA to produce 4,2',4',6'-tetrahydroxychalcone (also termed naringenin-chalcone or chalcone) which can, under specific conditions, spontaneously isomerize into naringenin. The sequence is that of Chalcone synthase H2 from Humulus lupulus (European hop).